Reading from the N-terminus, the 1960-residue chain is Zinc finger protein 638 (1960 aa).

Residues 1–137 (MSRPRFNPRG…SPKVQSRYTK (137 aa)) are disordered. Over residues 19 to 31 (APNPPGMRPPGPF) the composition is skewed to pro residues. Residues R47, R49, and R54 each carry the asymmetric dimethylarginine modification. The span at 60-75 (SYQNMGPQRMNVQVTQ) shows a compositional bias: polar residues. Residues 76-89 (HRTDPRLTKEKLDF) are compositionally biased toward basic and acidic residues. The segment covering 117 to 137 (KQSSVTQVTEQSPKVQSRYTK) has biased composition (polar residues). S128 and S288 each carry phosphoserine. K291 participates in a covalent cross-link: Glycyl lysine isopeptide (Lys-Gly) (interchain with G-Cter in SUMO2). 4 positions are modified to phosphoserine: S298, S367, S381, and S418. The disordered stretch occupies residues 352-373 (KSVISSADAHGGPTESKKDYQS). Disordered stretches follow at residues 463–673 (NPEI…QSLS), 749–804 (PGKK…STVK), and 827–899 (KASI…KESE). Residues 468–483 (PSRRNESNRKENETPR) are compositionally biased toward basic and acidic residues. Residues 470-573 (RRNESNRKEN…ERTSRKSVRS (104 aa)) form an involved in localization to nuclear speckles region. Basic residues predominate over residues 484-556 (RRSHSPSPRH…SRNLLRRSPK (73 aa)). S554 is subject to Phosphoserine. Composition is skewed to basic and acidic residues over residues 565–583 (RTSRKSVRSDRKKALEDGG) and 591–602 (EVTKQKHTETVD). Phosphoserine occurs at positions 606 and 615. A compositionally biased stretch (low complexity) spans 618–628 (KPSAKSLSSVK). A Phosphoserine modification is found at S637. Positions 676 to 751 (SILLVSELPE…KSVKVCVPGK (76 aa)) constitute an RRM 1 domain. Basic and acidic residues predominate over residues 755–782 (QNKEMKKKPSDIKKSSASALKKETDASK). K775 participates in a covalent cross-link: Glycyl lysine isopeptide (Lys-Gly) (interchain with G-Cter in SUMO2). Over residues 783–802 (TMETVSSSSSAKSGQIKSST) the composition is skewed to low complexity. Basic and acidic residues-rich tracts occupy residues 838–854 (KSLEAKKSGNIKNKDSN), 867–879 (ASSEDKATGKSAE), and 888–899 (ATEKEPVNKESE). One can recognise an RRM 2 domain in the interval 902-976 (SVVFISNLPN…NQLSISMAPE (75 aa)). Over residues 1082–1092 (SEVQRKNDLEL) the composition is skewed to basic and acidic residues. 5 disordered regions span residues 1082–1151 (SEVQ…EEPK), 1396–1420 (TVVSSPKAKSTPSKTESHSTFPKPV), 1442–1462 (TRSGLAESNSKSKPTQIGVNR), 1484–1527 (TKQS…KSKE), and 1550–1583 (PSQAKQNPLKGKRKEALKISPSPELNLKKKKGKT). S1099 is modified (phosphoserine). A compositionally biased stretch (basic and acidic residues) spans 1140 to 1151 (VHQEELGKEEPK). The segment covering 1399–1409 (SSPKAKSTPSK) has biased composition (low complexity). S1400 is modified (phosphoserine). The segment covering 1442–1459 (TRSGLAESNSKSKPTQIG) has biased composition (polar residues). 2 stretches are compositionally biased toward basic and acidic residues: residues 1484–1503 (TKQSQETETKPPIMKRDDSN) and 1518–1527 (TTDRSSKSKE). 2 positions are modified to phosphoserine: S1635 and S1661. Disordered stretches follow at residues 1763 to 1898 (EVGD…SDVP) and 1930 to 1960 (KSTRHKQNTEKFMAKQRKEKEQNETEERSSR). Basic and acidic residues predominate over residues 1772 to 1790 (NDSKVELARGKIEHHTDKK). Residue K1804 forms a Glycyl lysine isopeptide (Lys-Gly) (interchain with G-Cter in SUMO2) linkage. Residues 1806–1818 (DSFSQVGPGSETV) are compositionally biased toward polar residues. Residues 1819–1831 (TQKDLKTMPERHL) are compositionally biased toward basic and acidic residues. A Phosphoserine modification is found at S1864. The segment covering 1870-1885 (AELKDSEPDEKRRKTQ) has biased composition (basic and acidic residues). The Matrin-type zinc finger occupies 1876 to 1906 (EPDEKRRKTQDSSVGKSMTSDVPGDLDFLVP). The segment covering 1886 to 1895 (DSSVGKSMTS) has biased composition (polar residues). Residues 1936-1960 (QNTEKFMAKQRKEKEQNETEERSSR) are compositionally biased toward basic and acidic residues.

In terms of assembly, interacts with FHL2. Interacts with CEBPA, CEBPD and CEBPG. Interacts with MPHOSPH8 and TASOR components of the HUSH complex; leading to recruitment of the HUSH complex. Interacts with SETDB1. Interacts with HDAC1. Interacts with HDAC4.

It localises to the nucleus speckle. Functionally, transcription factor that binds to cytidine clusters in double-stranded DNA. Plays a key role in the silencing of unintegrated retroviral DNA: some part of the retroviral DNA formed immediately after infection remains unintegrated in the host genome and is transcriptionally repressed. Mediates transcriptional repression of unintegrated viral DNA by specifically binding to the cytidine clusters of retroviral DNA and mediating the recruitment of chromatin silencers, such as the HUSH complex, SETDB1 and the histone deacetylases HDAC1 and HDAC4. Acts as an early regulator of adipogenesis by acting as a transcription cofactor of CEBPs (CEBPA, CEBPD and/or CEBPG), controlling the expression of PPARG and probably of other proadipogenic genes, such as SREBF1. May also regulate alternative splicing of target genes during adipogenesis. In Mus musculus (Mouse), this protein is Zinc finger protein 638.